The primary structure comprises 377 residues: Carbamoyl phosphate synthase small chain (377 aa).

The interval 1-186 is CPSase; the sequence is MSTPALLVLA…LGKGFVTPDE (186 aa). 3 residues coordinate L-glutamine: Ser-47, Gly-238, and Gly-240. One can recognise a Glutamine amidotransferase type-1 domain in the interval 190-377; that stretch reads HVVAYDFGVK…IGNMKAAKRA (188 aa). The active-site Nucleophile is Cys-266. Positions 267, 270, 308, 310, and 311 each coordinate L-glutamine. Residues His-350 and Glu-352 contribute to the active site.

This sequence belongs to the CarA family. As to quaternary structure, composed of two chains; the small (or glutamine) chain promotes the hydrolysis of glutamine to ammonia, which is used by the large (or ammonia) chain to synthesize carbamoyl phosphate. Tetramer of heterodimers (alpha,beta)4.

The catalysed reaction is hydrogencarbonate + L-glutamine + 2 ATP + H2O = carbamoyl phosphate + L-glutamate + 2 ADP + phosphate + 2 H(+). The enzyme catalyses L-glutamine + H2O = L-glutamate + NH4(+). It functions in the pathway amino-acid biosynthesis; L-arginine biosynthesis; carbamoyl phosphate from bicarbonate: step 1/1. Its pathway is pyrimidine metabolism; UMP biosynthesis via de novo pathway; (S)-dihydroorotate from bicarbonate: step 1/3. In terms of biological role, small subunit of the glutamine-dependent carbamoyl phosphate synthetase (CPSase). CPSase catalyzes the formation of carbamoyl phosphate from the ammonia moiety of glutamine, carbonate, and phosphate donated by ATP, constituting the first step of 2 biosynthetic pathways, one leading to arginine and/or urea and the other to pyrimidine nucleotides. The small subunit (glutamine amidotransferase) binds and cleaves glutamine to supply the large subunit with the substrate ammonia. The sequence is that of Carbamoyl phosphate synthase small chain from Neisseria meningitidis serogroup B (strain ATCC BAA-335 / MC58).